The chain runs to 645 residues: 1,4-alpha-glucan branching enzyme GlgB (645 aa).

The active-site Nucleophile is D309. The active-site Proton donor is E352. The interval 621–645 (MRKGSKKQDGKKAELRSNATSRRKR) is disordered. The span at 626–635 (KKQDGKKAEL) shows a compositional bias: basic and acidic residues.

The protein belongs to the glycosyl hydrolase 13 family. GlgB subfamily. As to quaternary structure, monomer.

The catalysed reaction is Transfers a segment of a (1-&gt;4)-alpha-D-glucan chain to a primary hydroxy group in a similar glucan chain.. It functions in the pathway glycan biosynthesis; glycogen biosynthesis. In terms of biological role, catalyzes the formation of the alpha-1,6-glucosidic linkages in glycogen by scission of a 1,4-alpha-linked oligosaccharide from growing alpha-1,4-glucan chains and the subsequent attachment of the oligosaccharide to the alpha-1,6 position. In Bacillus cytotoxicus (strain DSM 22905 / CIP 110041 / 391-98 / NVH 391-98), this protein is 1,4-alpha-glucan branching enzyme GlgB.